We begin with the raw amino-acid sequence, 363 residues long: Mitogen-activated protein kinase 4 (363 aa).

One can recognise a Protein kinase domain in the interval 30–318 (YDLVKVVGFG…AKQVMEHPYF (289 aa)). ATP-binding positions include 36–44 (VGFGACGTV) and K59. The active-site Proton acceptor is D156. S186 and S187 each carry phosphoserine. T190 is modified (phosphothreonine; by MKK5). The TQY motif lies at 190 to 192 (TQY). At Y192 the chain carries Phosphotyrosine; by MKK5.

It belongs to the protein kinase superfamily. CMGC Ser/Thr protein kinase family. MAP kinase subfamily. The cofactor is Mg(2+). In terms of processing, dually phosphorylated on Thr-190 and Tyr-192, which activates the enzyme.

The catalysed reaction is L-seryl-[protein] + ATP = O-phospho-L-seryl-[protein] + ADP + H(+). The enzyme catalyses L-threonyl-[protein] + ATP = O-phospho-L-threonyl-[protein] + ADP + H(+). Its function is as follows. Essential for the two main proliferating life stages, the promastigotes and amastigotes, of the parasite. This is Mitogen-activated protein kinase 4 from Leishmania mexicana.